The primary structure comprises 76 residues: uncharacterized protein (76 aa).

The protein to L.innocua lin1255, lin1742 and lin2600.

This is an uncharacterized protein from Listeria innocua serovar 6a (strain ATCC BAA-680 / CLIP 11262).